A 489-amino-acid chain; its full sequence is 5-hydroxytryptamine receptor 3A (489 aa).

The N-terminal stretch at 1–23 (MRLCIPQVLLALFLSMLTAPGEG) is a signal peptide. Residues 24–246 (SRRRATQARD…MKFYVIIRRR (223 aa)) lie on the Extracellular side of the membrane. N109, N175, and N191 each carry an N-linked (GlcNAc...) asparagine glycan. The cysteines at positions 162 and 176 are disulfide-linked. The chain crosses the membrane as a helical span at residues 247-273 (PLFYAVSLLLPSIFLMVVDIVGFCLPP). The Cytoplasmic portion of the chain corresponds to 274 to 278 (DSGER). A helical transmembrane segment spans residues 279–297 (VSFKITLLLGYSVFLIIVS). Residues 298–307 (DTLPATAIGT) lie on the Extracellular side of the membrane. A helical membrane pass occupies residues 308–326 (PLIGVYFVVCMALLVISLA). The Cytoplasmic segment spans residues 327-466 (ETIFIVRLVH…GYVLDRLLFR (140 aa)). Positions 425–461 (AVRGLLQELSSIRHFLEKRDEMREVARDWLRVGYVLD) are HA-stretch; determines single-channel conductance in 5-HT3 receptors. Residues 467–486 (IYLLAVLAYSITLVTLWSIW) traverse the membrane as a helical segment. The Extracellular segment spans residues 487 to 489 (HYS).

Belongs to the ligand-gated ion channel (TC 1.A.9) family. 5-hydroxytryptamine receptor (TC 1.A.9.2) subfamily. HTR3A sub-subfamily. In terms of assembly, forms homopentameric as well as heteropentameric serotonin-activated cation-selective channel complexes with HTR3B or HTR3C or HTR3D or HTR3E. The homomeric complex is functional but exhibits low conductance with modified voltage dependence, and decreased agonist and antagonist affinity. Heteropentameric complexes display properties which resemble that of neuronal serotonin-activated channels in vivo. Interacts with RIC3. In terms of tissue distribution, brain, spinal cord, and heart.

The protein localises to the postsynaptic cell membrane. It is found in the cell membrane. It catalyses the reaction Na(+)(in) = Na(+)(out). The catalysed reaction is K(+)(in) = K(+)(out). It carries out the reaction Ca(2+)(in) = Ca(2+)(out). The enzyme catalyses Mg(2+)(in) = Mg(2+)(out). Functionally, forms serotonin (5-hydroxytryptamine/5-HT3)-activated cation-selective channel complexes, which when activated cause fast, depolarizing responses in neurons. The polypeptide is 5-hydroxytryptamine receptor 3A (Mus musculus (Mouse)).